The primary structure comprises 208 residues: Probable molybdenum cofactor guanylyltransferase (208 aa).

GTP-binding positions include 12–14 (IAG), Lys24, Asp72, and Asp101. Residue Asp101 participates in Mg(2+) binding.

The protein belongs to the MobA family. The cofactor is Mg(2+).

Its subcellular location is the cytoplasm. The enzyme catalyses Mo-molybdopterin + GTP + H(+) = Mo-molybdopterin guanine dinucleotide + diphosphate. Its function is as follows. Transfers a GMP moiety from GTP to Mo-molybdopterin (Mo-MPT) cofactor (Moco or molybdenum cofactor) to form Mo-molybdopterin guanine dinucleotide (Mo-MGD) cofactor. The polypeptide is Probable molybdenum cofactor guanylyltransferase (Chloroflexus aggregans (strain MD-66 / DSM 9485)).